The following is a 225-amino-acid chain: Phosphoribosylformylglycinamidine synthase subunit PurQ (225 aa).

A Glutamine amidotransferase type-1 domain is found at 4–225 (RVGVITFPGT…YSVLDSVISA (222 aa)). Catalysis depends on Cys87, which acts as the Nucleophile. Active-site residues include His196 and Glu198.

Part of the FGAM synthase complex composed of 1 PurL, 1 PurQ and 2 PurS subunits.

The protein resides in the cytoplasm. The catalysed reaction is N(2)-formyl-N(1)-(5-phospho-beta-D-ribosyl)glycinamide + L-glutamine + ATP + H2O = 2-formamido-N(1)-(5-O-phospho-beta-D-ribosyl)acetamidine + L-glutamate + ADP + phosphate + H(+). It carries out the reaction L-glutamine + H2O = L-glutamate + NH4(+). It functions in the pathway purine metabolism; IMP biosynthesis via de novo pathway; 5-amino-1-(5-phospho-D-ribosyl)imidazole from N(2)-formyl-N(1)-(5-phospho-D-ribosyl)glycinamide: step 1/2. Functionally, part of the phosphoribosylformylglycinamidine synthase complex involved in the purines biosynthetic pathway. Catalyzes the ATP-dependent conversion of formylglycinamide ribonucleotide (FGAR) and glutamine to yield formylglycinamidine ribonucleotide (FGAM) and glutamate. The FGAM synthase complex is composed of three subunits. PurQ produces an ammonia molecule by converting glutamine to glutamate. PurL transfers the ammonia molecule to FGAR to form FGAM in an ATP-dependent manner. PurS interacts with PurQ and PurL and is thought to assist in the transfer of the ammonia molecule from PurQ to PurL. The sequence is that of Phosphoribosylformylglycinamidine synthase subunit PurQ from Rhodococcus jostii (strain RHA1).